The primary structure comprises 247 residues: 2-amino-5-formylamino-6-ribosylaminopyrimidin-4(3H)-one 5'-monophosphate deformylase (247 aa).

The Fe cation site is built by glutamate 41, histidine 43, aspartate 52, and histidine 121.

This sequence belongs to the creatininase superfamily. FAPy deformylase family. As to quaternary structure, homodimer. Fe(2+) serves as cofactor. The cofactor is Zn(2+).

It carries out the reaction 2-amino-5-formylamino-6-(5-phospho-D-ribosylamino)pyrimidin-4(3H)-one + H2O = 2,5-diamino-6-(1-D-ribosylamino)pyrimidin-4(3H)-one 5'-phosphate + formate + H(+). It functions in the pathway cofactor biosynthesis; coenzyme F420 biosynthesis. It participates in cofactor biosynthesis; riboflavin biosynthesis. Functionally, catalyzes the hydrolysis of the formamide of 2-amino-5-formylamino-6-ribosylamino-4(3H)-pyrimidinone 5'-monophosphate (FAPy) to form 2,5-diamino-6-ribosylamino-4(3H)-pyrimidinone 5'-phosphate (APy). This chain is 2-amino-5-formylamino-6-ribosylaminopyrimidin-4(3H)-one 5'-monophosphate deformylase, found in Methanothermus fervidus (strain ATCC 43054 / DSM 2088 / JCM 10308 / V24 S).